The following is a 141-amino-acid chain: ATP synthase epsilon chain (141 aa).

Belongs to the ATPase epsilon chain family. F-type ATPases have 2 components, CF(1) - the catalytic core - and CF(0) - the membrane proton channel. CF(1) has five subunits: alpha(3), beta(3), gamma(1), delta(1), epsilon(1). CF(0) has three main subunits: a, b and c.

The protein localises to the cell inner membrane. Its function is as follows. Produces ATP from ADP in the presence of a proton gradient across the membrane. The polypeptide is ATP synthase epsilon chain (Paraburkholderia phymatum (strain DSM 17167 / CIP 108236 / LMG 21445 / STM815) (Burkholderia phymatum)).